A 511-amino-acid chain; its full sequence is RNA polymerase principal sigma factor HrdB (511 aa).

The interval 72–186 (SAAEPKRTRK…AATEEPEGTE (115 aa)) is disordered. Residues 78 to 93 (RTRKSVAAKSPAKRTA) show a composition bias toward basic residues. Residues 94–121 (TKAVAAKPVTSRKATAPAAPAAPATEPA) show a composition bias toward low complexity. Residues 132-158 (AAAKKTTAKKATAKKTTAKKAAAKKTT) are compositionally biased toward basic residues. The tract at residues 211-347 (TADPVKDYLK…ITRAMADQAR (137 aa)) is binds RNA polymerase-binding protein RbpA. The sigma-70 factor domain-2 stretch occupies residues 278 to 348 (LLEANLRLVV…TRAMADQART (71 aa)). Positions 302–305 (DLIQ) match the Interaction with polymerase core subunit RpoC motif. A sigma-70 factor domain-3 region spans residues 357-433 (EVINKLARVQ…DSEAVVPADA (77 aa)). The interval 446 to 499 (VLDTLSEREAGVVSMRFGLTDGQPKTLDEIGKVYGVTRERIRQIESKTMSKLRH) is sigma-70 factor domain-4. A DNA-binding region (H-T-H motif) is located at residues 472 to 491 (LDEIGKVYGVTRERIRQIES).

It belongs to the sigma-70 factor family. In terms of assembly, homotrimer (Potential). interacts transiently with the RNA polymerase core complex. Interacts with RNA polymerase-binding protein RbpA via its sigma-2 region (residues 211-347) in a free form.

In terms of biological role, sigma factors are initiation factors that promote the attachment of RNA polymerase to specific initiation sites and are then released. This sigma factor is the primary sigma factor during exponential growth. Its activity is stimulated by RbpA. The sequence is that of RNA polymerase principal sigma factor HrdB (hrdB) from Streptomyces coelicolor (strain ATCC BAA-471 / A3(2) / M145).